Here is a 66-residue protein sequence, read N- to C-terminus: Large ribosomal subunit protein uL29 (66 aa).

Belongs to the universal ribosomal protein uL29 family.

This is Large ribosomal subunit protein uL29 from Brucella abortus (strain S19).